The sequence spans 449 residues: Adenosylhomocysteinase (449 aa).

S2 carries the N-acetylserine modification. Residue K21 forms a Glycyl lysine isopeptide (Lys-Gly) (interchain with G-Cter in ubiquitin) linkage. Positions 58, 134, and 159 each coordinate substrate. T160–T162 is an NAD(+) binding site. Positions 189 and 193 each coordinate substrate. NAD(+) is bound by residues N194, G223–G228, E246, I302–H304, and N349. T393 is subject to Phosphothreonine. Residue K413 forms a Glycyl lysine isopeptide (Lys-Gly) (interchain with G-Cter in ubiquitin) linkage.

This sequence belongs to the adenosylhomocysteinase family. It depends on NAD(+) as a cofactor.

It carries out the reaction S-adenosyl-L-homocysteine + H2O = L-homocysteine + adenosine. It participates in amino-acid biosynthesis; L-homocysteine biosynthesis; L-homocysteine from S-adenosyl-L-homocysteine: step 1/1. Adenosylhomocysteine is a competitive inhibitor of S-adenosyl-L-methionine-dependent methyl transferase reactions; therefore adenosylhomocysteinase may play a key role in the control of methylations via regulation of the intracellular concentration of adenosylhomocysteine. The polypeptide is Adenosylhomocysteinase (SAH1) (Saccharomyces cerevisiae (strain ATCC 204508 / S288c) (Baker's yeast)).